Reading from the N-terminus, the 211-residue chain is ATP-dependent Clp protease proteolytic subunit (211 aa).

Ser-114 serves as the catalytic Nucleophile. Residue His-139 is part of the active site.

The protein belongs to the peptidase S14 family. As to quaternary structure, fourteen ClpP subunits assemble into 2 heptameric rings which stack back to back to give a disk-like structure with a central cavity, resembling the structure of eukaryotic proteasomes.

The protein resides in the cytoplasm. The catalysed reaction is Hydrolysis of proteins to small peptides in the presence of ATP and magnesium. alpha-casein is the usual test substrate. In the absence of ATP, only oligopeptides shorter than five residues are hydrolyzed (such as succinyl-Leu-Tyr-|-NHMec, and Leu-Tyr-Leu-|-Tyr-Trp, in which cleavage of the -Tyr-|-Leu- and -Tyr-|-Trp bonds also occurs).. Its function is as follows. Cleaves peptides in various proteins in a process that requires ATP hydrolysis. Has a chymotrypsin-like activity. Plays a major role in the degradation of misfolded proteins. This Pseudomonas fluorescens (strain SBW25) protein is ATP-dependent Clp protease proteolytic subunit.